A 644-amino-acid polypeptide reads, in one-letter code: 3D-(3,5/4)-trihydroxycyclohexane-1,2-dione hydrolase 2 (644 aa).

Glu65 contributes to the thiamine diphosphate binding site. Residues Ser442–Gly522 are thiamine pyrophosphate binding. Mg(2+) is bound by residues Asp493 and Asn520.

The protein belongs to the TPP enzyme family. Mg(2+) is required as a cofactor. The cofactor is thiamine diphosphate.

It catalyses the reaction 3D-3,5/4-trihydroxycyclohexane-1,2-dione + H2O = 5-deoxy-D-glucuronate + H(+). It functions in the pathway polyol metabolism; myo-inositol degradation into acetyl-CoA; acetyl-CoA from myo-inositol: step 3/7. Involved in the cleavage of the C1-C2 bond of 3D-(3,5/4)-trihydroxycyclohexane-1,2-dione (THcHDO) to yield 5-deoxy-glucuronate (5DG). The chain is 3D-(3,5/4)-trihydroxycyclohexane-1,2-dione hydrolase 2 from Bacillus cereus (strain ZK / E33L).